Consider the following 1865-residue polypeptide: Transcription initiation factor TFIID subunit 1 (1865 aa).

Positions 1–27 (MLLPATGASRSAAIMSDTDSDEDSSGG) are disordered. The 409-residue stretch at 1–409 (MLLPATGASR…VTQLHWEDDI (409 aa)) folds into the Protein kinase 1 domain. Serine 131 carries the phosphoserine; by autocatalysis modification. A disordered region spans residues 144-199 (EDIDCKLMPPPPPPPGPVKKEKDQDGLTGEKVDFSSSSDSESEMGPQEAAQAESKD). Residues 151-160 (MPPPPPPPGP) are compositionally biased toward pro residues. A compositionally biased stretch (basic and acidic residues) spans 161-176 (VKKEKDQDGLTGEKVD). Serine 302 carries the phosphoserine; by autocatalysis modification. The disordered stretch occupies residues 509–530 (PDEKEEATSNSPSKENKKESSL). The tract at residues 512 to 971 (KEEATSNSPS…KIPNKPTQQK (460 aa)) is histone acetyltransferase (HAT). The residue at position 539 (lysine 539) is an N6-acetyllysine. Residues lysine 544 and lysine 557 each participate in a glycyl lysine isopeptide (Lys-Gly) (interchain with G-Cter in SUMO2) cross-link. 2 disordered regions span residues 964 to 983 (PNKPTQQKDDKEPQPVKKTV) and 1228 to 1252 (RLKRNQEKEKLKGPPEKKPKKMKER). Composition is skewed to basic and acidic residues over residues 969-978 (QQKDDKEPQP) and 1228-1244 (RLKRNQEKEKLKGPPEK). A DNA-binding region (HMG box) is located at residues 1190–1268 (VRIRTTKDEE…CGACGAIGHM (79 aa)). The segment at 1337–1624 (VLKFPKQQLP…TAKEAALEEA (288 aa)) is interaction with ASF1A and ASF1B. The short motif at 1346 to 1353 (PPKKKRRV) is the Nuclear localization signal element. Bromo domains lie at 1371–1479 (RRRT…LKEK) and 1493–1602 (LLDD…LTEY). The Protein kinase 2 domain occupies 1420–1865 (MDLQTLRENV…AGDSDMDSDE (446 aa)). The tract at residues 1625–1865 (ELESLDPMTP…AGDSDMDSDE (241 aa)) is disordered. The segment covering 1633-1642 (TPGPYTPQPP) has biased composition (pro residues). Polar residues predominate over residues 1646-1682 (DNSTSLSVSRDASVYQDESNMSVLDIPSATSEKQLTQ). A phosphoserine mark is found at serine 1664 and serine 1667. 2 stretches are compositionally biased toward acidic residues: residues 1683-1697 (EGEDGDGDLADEEEG) and 1715-1730 (EGEDDEEDAGSDEEGD). Low complexity predominate over residues 1739-1751 (SESGSDSDVGSGS). A phosphoserine mark is found at serine 1773, serine 1776, and serine 1794. Residues 1804 to 1814 (KSNTQDTSFSS) are compositionally biased toward polar residues. Residues 1820–1829 (VSEEEEDEEE) show a composition bias toward acidic residues. Serine 1821 bears the Phosphoserine mark. Polar residues predominate over residues 1832–1841 (SGPSVLSQVH).

This sequence belongs to the TAF1 family. Component of the TFIID basal transcription factor complex, composed of TATA-box-binding protein TBP, and a number of TBP-associated factors (TAFs), including TAF1, TAF2, TAF3, TAF4, TAF5, TAF6, TAF7, TAF8, TAF9, TAF10, TAF11, TAF12 and TAF13. Interacts with TAF7; the interaction is direct. TAF1, when part of the TFIID complex, interacts with C-terminus of TP53. Part of a TFIID-containing RNA polymerase II pre-initiation complex that is composed of TBP and at least GTF2A1, GTF2A2, GTF2E1, GTF2E2, GTF2F1, GTF2H2, GTF2H3, GTF2H4, GTF2H5, GTF2B, TCEA1, ERCC2, ERCC3, TAF1, TAF2, TAF3, TAF4, TAF5, TAF6, TAF7, TAF8, TAF9, TAF10, TAF11, TAF12 and TAF13. Component of some MLL1/MLL complex, at least composed of the core components KMT2A/MLL1, ASH2L, HCFC1/HCF1, WDR5 and RBBP5, as well as the facultative components BACC1, CHD8, E2F6, HSP70, INO80C, KANSL1, LAS1L, MAX, MCRS1, MGA, KAT8/MOF, PELP1, PHF20, PRP31, RING2, RUVB1/TIP49A, RUVB2/TIP49B, SENP3, TAF1, TAF4, TAF6, TAF7, TAF9 and TEX10. RB1 interacts with the N-terminal domain of TAF1. Interacts with ASF1A and ASF1B. Interacts (via bromo domains) with acetylated lysine residues on the N-terminus of histone H1.4, H2A, H2B, H3 and H4 (in vitro). Mg(2+) serves as cofactor. Post-translationally, phosphorylated by casein kinase II in vitro.

It localises to the nucleus. The enzyme catalyses L-seryl-[protein] + ATP = O-phospho-L-seryl-[protein] + ADP + H(+). It catalyses the reaction L-threonyl-[protein] + ATP = O-phospho-L-threonyl-[protein] + ADP + H(+). It carries out the reaction L-lysyl-[protein] + acetyl-CoA = N(6)-acetyl-L-lysyl-[protein] + CoA + H(+). With respect to regulation, autophosphorylates on Ser residues. Inhibited by retinoblastoma tumor suppressor protein, RB1. Binding to TAF1 or CIITA inhibits the histone acetyltransferase activity. Its function is as follows. The TFIID basal transcription factor complex plays a major role in the initiation of RNA polymerase II (Pol II)-dependent transcription. TFIID recognizes and binds promoters with or without a TATA box via its subunit TBP, a TATA-box-binding protein, and promotes assembly of the pre-initiation complex (PIC). The TFIID complex consists of TBP and TBP-associated factors (TAFs), including TAF1, TAF2, TAF3, TAF4, TAF5, TAF6, TAF7, TAF8, TAF9, TAF10, TAF11, TAF12 and TAF13. TAF1 is the largest component and core scaffold of the TFIID complex, involved in nucleating complex assembly. TAF1 forms a promoter DNA binding subcomplex of TFIID, together with TAF7 and TAF2. Contains novel N- and C-terminal Ser/Thr kinase domains which can autophosphorylate or transphosphorylate other transcription factors. Phosphorylates TP53 on 'Thr-55' which leads to MDM2-mediated degradation of TP53. Phosphorylates GTF2A1 and GTF2F1 on Ser residues. Possesses DNA-binding activity. Essential for progression of the G1 phase of the cell cycle. The protein is Transcription initiation factor TFIID subunit 1 of Mesocricetus auratus (Golden hamster).